We begin with the raw amino-acid sequence, 470 residues long: GTPase grn1 (470 aa).

Over residues 1–16 the composition is skewed to basic residues; sequence MVSLKKKSKRRTTRLR. The interval 1-56 is disordered; the sequence is MVSLKKKSKRRTTRLRSRIEKKAAESKRKQKRADKKNPQWKSRIPKDPGIPNSFPY. Residues 17 to 27 are compositionally biased toward basic and acidic residues; it reads SRIEKKAAESK. The 181-residue stretch at 153-333 folds into the CP-type G domain; it reads DKEFKKVVEA…LVDSPGIVFP (181 aa). Residues 202–205, 276–283, and 326–329 each bind GTP; these read NKID, GYPNVGKS, and DSPG. An RNA-binding region spans residues 405–415; that stretch reads ARKRGRLGRGG.

The protein belongs to the TRAFAC class YlqF/YawG GTPase family.

The protein resides in the nucleus. It localises to the nucleolus. Functionally, required for optimal growth. Required for normal processing of ribosomal pre-rRNA. Required for nuclear export of ribosomal protein rpl2501. In Schizosaccharomyces pombe (strain 972 / ATCC 24843) (Fission yeast), this protein is GTPase grn1.